Here is a 963-residue protein sequence, read N- to C-terminus: VPS35 endosomal protein-sorting factor-like (963 aa).

Residues Ser43–Pro112 form a disordered region. Positions Lys51–Val72 are enriched in low complexity. Ser265 carries the post-translational modification Phosphoserine. A helical membrane pass occupies residues Ala699–Phe719.

Belongs to the VPS35L family. In terms of assembly, component of the heterotrimeric retriever complex formed by VPS26C, VPS29 and VPS35L. Interacts with VPS29. Interacts with COMMD1, CCDC93 and CCDC22; associates with the CCC (COMMD/CCDC22/CCDC93) complex which contains at least COMMD1 (and possibly other COMM domain-containing proteins), CCDC22 and CCDC93. Interacts with WASHC1, WASHC2A and WASHC2C. Interacts with SNX17 and SNX31.

The protein localises to the membrane. The protein resides in the endosome. In terms of biological role, acts as a component of the retriever complex. The retriever complex is a heterotrimeric complex related to retromer cargo-selective complex (CSC) and essential for retromer-independent retrieval and recycling of numerous cargos such as integrin alpha-5/beta-1 (ITGA5:ITGB1). The recruitment of the retriever complex to the endosomal membrane involves CCC and WASH complexes. In the endosomes, drives the retrieval and recycling of NxxY-motif-containing cargo proteins by coupling to SNX17, a cargo essential for the homeostatic maintenance of numerous cell surface proteins associated with processes that include cell migration, cell adhesion, nutrient supply and cell signaling. Involved in copper-dependent ATP7A trafficking between the trans-Golgi network and vesicles in the cell periphery; the function is proposed to depend on its association with the CCC complex and cooperation with the WASH complex on early endosomes. Seems not to be required for CCC complex stability. The sequence is that of VPS35 endosomal protein-sorting factor-like from Mus musculus (Mouse).